The sequence spans 279 residues: Putative pyruvate, phosphate dikinase regulatory protein (279 aa).

156 to 163 contacts ADP; the sequence is GVSRTSKT.

This sequence belongs to the pyruvate, phosphate/water dikinase regulatory protein family. PDRP subfamily.

It catalyses the reaction N(tele)-phospho-L-histidyl/L-threonyl-[pyruvate, phosphate dikinase] + ADP = N(tele)-phospho-L-histidyl/O-phospho-L-threonyl-[pyruvate, phosphate dikinase] + AMP + H(+). The enzyme catalyses N(tele)-phospho-L-histidyl/O-phospho-L-threonyl-[pyruvate, phosphate dikinase] + phosphate + H(+) = N(tele)-phospho-L-histidyl/L-threonyl-[pyruvate, phosphate dikinase] + diphosphate. Bifunctional serine/threonine kinase and phosphorylase involved in the regulation of the pyruvate, phosphate dikinase (PPDK) by catalyzing its phosphorylation/dephosphorylation. This Maricaulis maris (strain MCS10) (Caulobacter maris) protein is Putative pyruvate, phosphate dikinase regulatory protein.